The following is a 340-amino-acid chain: DNA repair protein RAD51 homolog A (340 aa).

Residues 1–14 (MSSAAQQQQKAAAA) show a composition bias toward low complexity. Residues 1 to 21 (MSSAAQQQQKAAAAEQEEVEH) form a disordered region. One can recognise a HhH domain in the interval 49–78 (TVEAVAYTPRKDLLQIKGISEAKADKIIEA). ATP is bound at residue 128–135 (GEFRSGKT).

The protein belongs to the RecA family. RAD51 subfamily. As to quaternary structure, self-associates and may interact with XRCC3 homolog. In terms of tissue distribution, highly expressed in mitotic and meiotic tissues, but low levels in differentiated tissues.

The protein localises to the nucleus. Functionally, binds to single and double-stranded DNA and exhibits DNA-dependent ATPase activity. Unwinds duplex DNA. Component of the meiotic recombination pathway. Seems to play a role in mediating chromosome homology search, chromosome pairing and synapsis at early stages and probably chromosome crossing-over at later stages in meiosis. Probably is involved in the repair of meiotic double strand breaks (DBSs) and in homologous recombination. The protein is DNA repair protein RAD51 homolog A (RAD51A) of Zea mays (Maize).